Consider the following 174-residue polypeptide: Ribosome maturation factor RimP (174 aa).

Belongs to the RimP family.

Its subcellular location is the cytoplasm. Its function is as follows. Required for maturation of 30S ribosomal subunits. The protein is Ribosome maturation factor RimP of Acinetobacter baylyi (strain ATCC 33305 / BD413 / ADP1).